The primary structure comprises 169 residues: uncharacterized protein (169 aa).

The Nudix hydrolase domain maps to L35–L163. A Nudix box motif is present at residues Y81–H103. Mg(2+)-binding residues include E88 and E92.

The protein belongs to the Nudix hydrolase family. Requires Mg(2+) as cofactor.

This is an uncharacterized protein from Pseudomonas aeruginosa (strain ATCC 15692 / DSM 22644 / CIP 104116 / JCM 14847 / LMG 12228 / 1C / PRS 101 / PAO1).